The primary structure comprises 397 residues: Argininosuccinate synthase (397 aa).

8–16 serves as a coordination point for ATP; the sequence is AYSGGLDTS. Tyr-87 contributes to the L-citrulline binding site. Position 117 (Gly-117) interacts with ATP. L-aspartate is bound by residues Thr-119, Asn-123, and Asp-124. Residue Asn-123 coordinates L-citrulline. The L-citrulline site is built by Arg-127, Ser-175, Glu-259, and Tyr-271.

This sequence belongs to the argininosuccinate synthase family. Type 1 subfamily. In terms of assembly, homotetramer.

It is found in the cytoplasm. The catalysed reaction is L-citrulline + L-aspartate + ATP = 2-(N(omega)-L-arginino)succinate + AMP + diphosphate + H(+). It functions in the pathway amino-acid biosynthesis; L-arginine biosynthesis; L-arginine from L-ornithine and carbamoyl phosphate: step 2/3. This Streptomyces griseus subsp. griseus (strain JCM 4626 / CBS 651.72 / NBRC 13350 / KCC S-0626 / ISP 5235) protein is Argininosuccinate synthase.